Here is a 720-residue protein sequence, read N- to C-terminus: Inactive serine protease PAMR1 (720 aa).

The N-terminal stretch at 1–21 is a signal peptide; sequence MELGCWTQLGLTFLQLLLISS. Cystine bridges form between C128–C150, C177–C199, C239–C250, C244–C260, C262–C271, C280–C329, C315–C342, C414–C442, and C489–C505. Positions 128–236 constitute a CUB domain; the sequence is CGQVLRAPKG…DGFHAIYEEI (109 aa). The 38-residue stretch at 235–272 folds into the EGF-like domain; the sequence is EITACSSSPCFHDGTCVLDKAGSYKCACLAGYTGQRCE. 2 consecutive Sushi domains span residues 278–344 and 387–444; these read RNCS…ICIK and APTK…SCIP. Residues 445–720 form the Peptidase S1 domain; the sequence is ICGKIENITA…FKDWIERNMK (276 aa). N614 carries N-linked (GlcNAc...) asparagine glycosylation. Cystine bridges form between C630–C649 and C661–C697.

This sequence belongs to the peptidase S1 family.

The protein localises to the secreted. Functionally, may play a role in regeneration of skeletal muscle. The sequence is that of Inactive serine protease PAMR1 (PAMR1) from Homo sapiens (Human).